A 323-amino-acid chain; its full sequence is Putative gluconeogenesis factor (323 aa).

The protein belongs to the gluconeogenesis factor family.

Its subcellular location is the cytoplasm. Functionally, required for morphogenesis under gluconeogenic growth conditions. The sequence is that of Putative gluconeogenesis factor from Thermoanaerobacterium thermosulfurigenes (Clostridium thermosulfurogenes).